The following is a 361-amino-acid chain: Cysteine-rich with EGF-like domain protein 2-A (361 aa).

The signal sequence occupies residues 1–24; sequence MNGSRALHLSAWLLLCLLCSAAVA. In terms of domain architecture, EGF-like 1 spans 134–176; the sequence is DCLACLGGSERPCHGNGFCNGDGTRSGDGLCRCEAEYTGPFCL. Cystine bridges form between Cys138-Cys152, Cys146-Cys164, and Cys166-Cys175. Asn188 carries an N-linked (GlcNAc...) asparagine glycan. 2 FU repeats span residues 191-238 and 251-298; these read YSLC…EESP and SFLC…SEQV. Residues 288-329 enclose the EGF-like 2; calcium-binding domain; it reads DVDECDASEQVCSRENETCLNTAGSYKCTCSEGFEDKEGNCV. 3 disulfide bridges follow: Cys292–Cys306, Cys299–Cys315, and Cys317–Cys328. Asn303 is a glycosylation site (N-linked (GlcNAc...) asparagine). Residues 341 to 361 are disordered; the sequence is DGEMGTSASDINISNTAHEDL. Residues 346 to 361 are compositionally biased toward polar residues; the sequence is TSASDINISNTAHEDL. An N-linked (GlcNAc...) asparagine glycan is attached at Asn352.

This sequence belongs to the CRELD family.

It localises to the secreted. It is found in the endoplasmic reticulum. In terms of biological role, possible role in neuronal acetylcholine receptor transport. In Xenopus laevis (African clawed frog), this protein is Cysteine-rich with EGF-like domain protein 2-A (creld2-a).